The sequence spans 225 residues: Ribonuclease HII (225 aa).

The region spanning glycine 2–serine 210 is the RNase H type-2 domain. A divalent metal cation is bound by residues aspartate 8, glutamate 9, and aspartate 107.

It belongs to the RNase HII family. It depends on Mn(2+) as a cofactor. Mg(2+) serves as cofactor.

It is found in the cytoplasm. The enzyme catalyses Endonucleolytic cleavage to 5'-phosphomonoester.. In terms of biological role, endonuclease that specifically degrades the RNA of RNA-DNA hybrids. This Aeropyrum pernix (strain ATCC 700893 / DSM 11879 / JCM 9820 / NBRC 100138 / K1) protein is Ribonuclease HII (rnhB).